The primary structure comprises 421 residues: RNA exonuclease 4 (421 aa).

Disordered regions lie at residues 1-51 (MAKA…ETKK) and 79-179 (ENQA…QPPK). Over residues 11–24 (SPCSGSLGKTANTP) the composition is skewed to polar residues. The span at 25–36 (KQKRKQKQRKFW) shows a compositional bias: basic residues. Composition is skewed to basic and acidic residues over residues 92-107 (PKKD…EESV), 140-149 (AAEKSDEVSK), and 161-170 (DTEHQGKKPQ). Positions 234-385 (TVAMDCEMVG…QDAQAAMRLY (152 aa)) constitute an Exonuclease domain.

This sequence belongs to the REXO4 family.

It is found in the nucleus. The protein is RNA exonuclease 4 (rexo4) of Xenopus laevis (African clawed frog).